A 178-amino-acid polypeptide reads, in one-letter code: CDP-archaeol synthase (178 aa).

The next 5 helical transmembrane spans lie at 3 to 23 (LLLL…ANAV), 56 to 76 (FFGI…VILY), 87 to 107 (LFGY…GDML), 123 to 145 (APIL…FYPL), and 150 to 169 (IVLL…IIAY).

This sequence belongs to the CDP-archaeol synthase family. Requires Mg(2+) as cofactor.

It is found in the cell membrane. The enzyme catalyses 2,3-bis-O-(geranylgeranyl)-sn-glycerol 1-phosphate + CTP + H(+) = CDP-2,3-bis-O-(geranylgeranyl)-sn-glycerol + diphosphate. It participates in membrane lipid metabolism; glycerophospholipid metabolism. Functionally, catalyzes the formation of CDP-2,3-bis-(O-geranylgeranyl)-sn-glycerol (CDP-archaeol) from 2,3-bis-(O-geranylgeranyl)-sn-glycerol 1-phosphate (DGGGP) and CTP. This reaction is the third ether-bond-formation step in the biosynthesis of archaeal membrane lipids. The polypeptide is CDP-archaeol synthase (Methanococcus maripaludis (strain C6 / ATCC BAA-1332)).